A 404-amino-acid polypeptide reads, in one-letter code: Sorting nexin-32 (404 aa).

Residues 1–10 (MEEQHQEAGN) are compositionally biased toward basic and acidic residues. The interval 1–29 (MEEQHQEAGNESKPSSTSVDLQGDSPLQV) is disordered. Over residues 11–20 (ESKPSSTSVD) the composition is skewed to polar residues. In terms of domain architecture, PX spans 21-168 (LQGDSPLQVE…SVFLEYSQDL (148 aa)). Residues 255 to 336 (TQEVNQLKRS…KARTRNREVR (82 aa)) are a coiled coil.

Belongs to the sorting nexin family.

In terms of biological role, may be involved in several stages of intracellular trafficking. The protein is Sorting nexin-32 (Snx32) of Mus musculus (Mouse).